Consider the following 194-residue polypeptide: ATP-dependent Clp protease proteolytic subunit 3 (194 aa).

The Nucleophile role is filled by S96. Residue H121 is part of the active site.

It belongs to the peptidase S14 family. As to quaternary structure, fourteen ClpP subunits assemble into 2 heptameric rings which stack back to back to give a disk-like structure with a central cavity, resembling the structure of eukaryotic proteasomes.

It is found in the cytoplasm. It carries out the reaction Hydrolysis of proteins to small peptides in the presence of ATP and magnesium. alpha-casein is the usual test substrate. In the absence of ATP, only oligopeptides shorter than five residues are hydrolyzed (such as succinyl-Leu-Tyr-|-NHMec, and Leu-Tyr-Leu-|-Tyr-Trp, in which cleavage of the -Tyr-|-Leu- and -Tyr-|-Trp bonds also occurs).. Functionally, cleaves peptides in various proteins in a process that requires ATP hydrolysis. Has a chymotrypsin-like activity. Plays a major role in the degradation of misfolded proteins. The chain is ATP-dependent Clp protease proteolytic subunit 3 from Prochlorococcus marinus (strain NATL2A).